Here is a 1349-residue protein sequence, read N- to C-terminus: Zinc finger protein 804B (1349 aa).

The segment at 55 to 79 adopts a C2H2-type zinc-finger fold; the sequence is FYCELCDKQYHKHQEFDNHINSYDH. A disordered region spans residues 985–1010; that stretch reads YASESRNDQDSAIPRTTEKDKSKSSH.

This Homo sapiens (Human) protein is Zinc finger protein 804B (ZNF804B).